The primary structure comprises 223 residues: Small ribosomal subunit protein uS3 (223 aa).

One can recognise a KH type-2 domain in the interval 39-108 (IRNFVKKNSY…NILINIVEVK (70 aa)).

It belongs to the universal ribosomal protein uS3 family. In terms of assembly, part of the 30S ribosomal subunit. Forms a tight complex with proteins S10 and S14.

Its function is as follows. Binds the lower part of the 30S subunit head. Binds mRNA in the 70S ribosome, positioning it for translation. This Clostridium botulinum (strain Hall / ATCC 3502 / NCTC 13319 / Type A) protein is Small ribosomal subunit protein uS3.